We begin with the raw amino-acid sequence, 477 residues long: Glutamyl-tRNA reductase (477 aa).

Substrate is bound by residues 49–52 (TCNR), serine 109, 114–116 (EGQ), and glutamine 120. Cysteine 50 acts as the Nucleophile in catalysis. 221-226 (GAGSMS) is an NADP(+) binding site.

The protein belongs to the glutamyl-tRNA reductase family. In terms of assembly, homodimer.

The catalysed reaction is (S)-4-amino-5-oxopentanoate + tRNA(Glu) + NADP(+) = L-glutamyl-tRNA(Glu) + NADPH + H(+). Its pathway is porphyrin-containing compound metabolism; protoporphyrin-IX biosynthesis; 5-aminolevulinate from L-glutamyl-tRNA(Glu): step 1/2. Its function is as follows. Catalyzes the NADPH-dependent reduction of glutamyl-tRNA(Glu) to glutamate 1-semialdehyde (GSA). The protein is Glutamyl-tRNA reductase of Thermobifida fusca (strain YX).